Reading from the N-terminus, the 147-residue chain is Peptide methionine sulfoxide reductase MsrB 2 (147 aa).

Residues 6 to 129 (TDEEVSKLTP…NSAALRFIPR (124 aa)) form the MsrB domain. Catalysis depends on cysteine 118, which acts as the Nucleophile.

This sequence belongs to the MsrB Met sulfoxide reductase family.

The catalysed reaction is L-methionyl-[protein] + [thioredoxin]-disulfide + H2O = L-methionyl-(R)-S-oxide-[protein] + [thioredoxin]-dithiol. This chain is Peptide methionine sulfoxide reductase MsrB 2 (msrB2), found in Rhizobium meliloti (strain 1021) (Ensifer meliloti).